The following is a 504-amino-acid chain: Histidine ammonia-lyase (504 aa).

Residues 142-144 (ASG) constitute a cross-link (5-imidazolinone (Ala-Gly)). Ser143 bears the 2,3-didehydroalanine (Ser) mark.

The protein belongs to the PAL/histidase family. In terms of processing, contains an active site 4-methylidene-imidazol-5-one (MIO), which is formed autocatalytically by cyclization and dehydration of residues Ala-Ser-Gly.

The protein localises to the cytoplasm. The enzyme catalyses L-histidine = trans-urocanate + NH4(+). Its pathway is amino-acid degradation; L-histidine degradation into L-glutamate; N-formimidoyl-L-glutamate from L-histidine: step 1/3. The protein is Histidine ammonia-lyase of Staphylococcus aureus (strain USA300).